A 739-amino-acid chain; its full sequence is Prestin (739 aa).

The Cytoplasmic segment spans residues 1–76 (MEHVTVSEEP…PILTWLPSYP (76 aa)). A helical membrane pass occupies residues 77–106 (LKEYLFGDIVSGISTGVMQLPQGLAYAMLA). At 107–109 (AVP) the chain is on the extracellular side. The chain crosses the membrane as a helical span at residues 110–127 (PVFGLYSSFYPVLLYTFF). Residues 128-138 (GTSKHISIGTF) are Cytoplasmic-facing. A helical transmembrane segment spans residues 139 to 152 (AVISLMIGGVAVRE). The Extracellular portion of the chain corresponds to 153–169 (APDSMFMVNGTNSSLVV). N-linked (GlcNAc...) asparagine glycans are attached at residues N161 and N164. A helical transmembrane segment spans residues 170–199 (NIEARDSRRVEVVVALTTLVGIIQFVLGLL). Topologically, residues 200 to 209 (RFGFLAIYLT) are cytoplasmic. A helical transmembrane segment spans residues 210-233 (EPLVRGFTTAAAVHVSVSQLKYLL). The Extracellular segment spans residues 234-244 (GVKTARFNGPL). Positions 245-256 (SVVYSLDAVLRN) form an intramembrane region, helical. At 257–261 (IADTN) the chain is on the extracellular side. The chain crosses the membrane as a helical span at residues 262–285 (IVTLIIGLGCTVFLYIIKQLNERF). The Cytoplasmic segment spans residues 286-294 (KKKLLIPIP). A helical membrane pass occupies residues 295-310 (GEIIVVIVSTGISYGM). Residues 311–335 (LMSENYGVDVVGKIPTGLLPPKVPD) are Extracellular-facing. Residues 336 to 370 (FSVFPNLFADAVPIAVVGFSITISLAKTFALKYGY) traverse the membrane as a helical segment. Residues 371 to 373 (SVD) are Cytoplasmic-facing. Residues 374–391 (GNQELIALGLCNFVSSFF) form a helical membrane-spanning segment. Over 392-399 (HTFVVTAS) the chain is Extracellular. The helical transmembrane segment at 400 to 409 (MSRSLVQEST) threads the bilayer. S401 contributes to the salicylate binding site. Residues 410–413 (GGHT) are Cytoplasmic-facing. A helical membrane pass occupies residues 414–435 (EIAGLLASLLVLLVVVAIGFVF). Residues 436–439 (QPLP) are Extracellular-facing. A helical membrane pass occupies residues 440 to 467 (TTVLAAIIMVNLLGMFKQTRDIPVLWRK). A topological domain (cytoplasmic) is located at residue S468. The helical transmembrane segment at 469–484 (KIELAIWLVSFFASVL) threads the bilayer. Residues 485–486 (LG) are Extracellular-facing. The helical transmembrane segment at 487 to 507 (LDYGLAVAMAFAILTVIYRTQ) threads the bilayer. An extended region for STAS domain region spans residues 508–731 (RPKNVVLGQI…AVLQCKRWRD (224 aa)). At 508 to 739 (RPKNVVLGQI…RDLPVHPNIH (232 aa)) the chain is on the cytoplasmic side. The STAS domain maps to 528–726 (EYEEAEECSG…PTIHDAVLQC (199 aa)).

The protein belongs to the SLC26A/SulP transporter (TC 2.A.53) family. Homodimer. Interacts (via STAS domain) with CALM; this interaction is calcium-dependent. As to expression, expressed in hair cells of the auditory organs.

Its subcellular location is the cell membrane. The catalysed reaction is oxalate(in) + chloride(out) = oxalate(out) + chloride(in). It carries out the reaction sulfate(out) + chloride(in) = sulfate(in) + chloride(out). Its activity is regulated as follows. Sulfate/chloride antiport activity is inhibited by salicylate; this inhibition is reversible. Its function is as follows. Electrogenic antiporter that exchanges sulfate or oxalate for chloride ion in a strictly coupled manner with a 1:1 stoichiometry. Adopts a dynamic conformation, which alternates between the exposure of the central binding site to the extra- and intracellular solutions leading to an inward-to-outward conformational transition during the transport cycle. Generates voltage-dependent charge movements resembling to the non-linear capacitance (NLC) of the cell membrane, but which are not associated to electromotile activity. The protein is Prestin of Danio rerio (Zebrafish).